Reading from the N-terminus, the 852-residue chain is Bifunctional isopimaradiene synthase, chloroplastic (852 aa).

A chloroplast-targeting transit peptide spans 1–53 (HHLTANTQSIPHFSTTLNAGSSARKRRSLYLRWGKGSNKIIACVGEGATSVPY). Position 252 (lysine 252) interacts with substrate. 2 residues coordinate Mg(2+): aspartate 385 and aspartate 387. The DXDD motif signature appears at 385 to 388 (DIDD). Lysine 472 contributes to the substrate binding site. Residues aspartate 604, aspartate 608, asparagine 748, threonine 752, and glutamate 756 each contribute to the Mg(2+) site. Positions 604-608 (DDLYD) match the DDXXD motif motif.

This sequence belongs to the terpene synthase family. Tpsd subfamily. Requires Mg(2+) as cofactor.

It localises to the plastid. The protein resides in the chloroplast. It catalyses the reaction (2E,6E,10E)-geranylgeranyl diphosphate = (+)-copalyl diphosphate. The enzyme catalyses (+)-copalyl diphosphate = isopimara-7,15-diene + diphosphate. The protein operates within terpene metabolism; oleoresin biosynthesis. In terms of biological role, involved in defensive oleoresin formation in conifers in response to insect attack or other injury. Involved in diterpene (C20) olefins biosynthesis. Bifunctional enzyme that catalyzes two sequential cyclizations of geranylgeranyl diphosphate (GGPP) to isopimara-7,15-diene. This Abies balsamea (Balsam fir) protein is Bifunctional isopimaradiene synthase, chloroplastic (TPS-ISO).